Reading from the N-terminus, the 329-residue chain is Cytochrome f (329 aa).

An N-terminal signal peptide occupies residues Met-1–Ala-44. Heme-binding residues include Tyr-45, Cys-65, Cys-68, and His-69. Residues Val-295–Lys-315 traverse the membrane as a helical segment.

It belongs to the cytochrome f family. The 4 large subunits of the cytochrome b6-f complex are cytochrome b6, subunit IV (17 kDa polypeptide, petD), cytochrome f and the Rieske protein, while the 4 small subunits are PetG, PetL, PetM and PetN. The complex functions as a dimer. Requires heme as cofactor.

The protein localises to the plastid. It localises to the chloroplast thylakoid membrane. Its function is as follows. Component of the cytochrome b6-f complex, which mediates electron transfer between photosystem II (PSII) and photosystem I (PSI), cyclic electron flow around PSI, and state transitions. The sequence is that of Cytochrome f from Tupiella akineta (Green alga).